The chain runs to 452 residues: Bifunctional protein GlmU (452 aa).

The segment at 1-226 (MSLTTVILAA…PMEVEGANNR (226 aa)) is pyrophosphorylase. UDP-N-acetyl-alpha-D-glucosamine contacts are provided by residues 8 to 11 (LAAG), lysine 22, glutamine 73, 78 to 79 (GT), 100 to 102 (YGD), glycine 137, glutamate 151, asparagine 166, and asparagine 224. Aspartate 102 contributes to the Mg(2+) binding site. Residue asparagine 224 coordinates Mg(2+). Residues 227 to 247 (IQLAGLERAYQAWQAQELMLN) form a linker region. The tract at residues 248–452 (GATLADPARI…LDGWKRPVKK (205 aa)) is N-acetyltransferase. UDP-N-acetyl-alpha-D-glucosamine contacts are provided by arginine 330 and lysine 348. Histidine 360 functions as the Proton acceptor in the catalytic mechanism. The UDP-N-acetyl-alpha-D-glucosamine site is built by tyrosine 363 and asparagine 374. Residues alanine 377, 383–384 (NY), serine 402, alanine 420, and arginine 437 contribute to the acetyl-CoA site.

In the N-terminal section; belongs to the N-acetylglucosamine-1-phosphate uridyltransferase family. The protein in the C-terminal section; belongs to the transferase hexapeptide repeat family. Homotrimer. Mg(2+) is required as a cofactor.

The protein resides in the cytoplasm. The enzyme catalyses alpha-D-glucosamine 1-phosphate + acetyl-CoA = N-acetyl-alpha-D-glucosamine 1-phosphate + CoA + H(+). It catalyses the reaction N-acetyl-alpha-D-glucosamine 1-phosphate + UTP + H(+) = UDP-N-acetyl-alpha-D-glucosamine + diphosphate. Its pathway is nucleotide-sugar biosynthesis; UDP-N-acetyl-alpha-D-glucosamine biosynthesis; N-acetyl-alpha-D-glucosamine 1-phosphate from alpha-D-glucosamine 6-phosphate (route II): step 2/2. The protein operates within nucleotide-sugar biosynthesis; UDP-N-acetyl-alpha-D-glucosamine biosynthesis; UDP-N-acetyl-alpha-D-glucosamine from N-acetyl-alpha-D-glucosamine 1-phosphate: step 1/1. It functions in the pathway bacterial outer membrane biogenesis; LPS lipid A biosynthesis. Catalyzes the last two sequential reactions in the de novo biosynthetic pathway for UDP-N-acetylglucosamine (UDP-GlcNAc). The C-terminal domain catalyzes the transfer of acetyl group from acetyl coenzyme A to glucosamine-1-phosphate (GlcN-1-P) to produce N-acetylglucosamine-1-phosphate (GlcNAc-1-P), which is converted into UDP-GlcNAc by the transfer of uridine 5-monophosphate (from uridine 5-triphosphate), a reaction catalyzed by the N-terminal domain. The protein is Bifunctional protein GlmU of Pseudoalteromonas translucida (strain TAC 125).